Consider the following 656-residue polypeptide: DNA topoisomerase 3 (656 aa).

The Toprim domain occupies lysine 2–leucine 156. Residues aspartate 172–tryptophan 635 enclose the Topo IA-type catalytic domain. The active-site O-(5'-phospho-DNA)-tyrosine intermediate is the tyrosine 356.

This sequence belongs to the type IA topoisomerase family. As to quaternary structure, forms a complex with SGS1 and RMI1. Interacts with SGS1.

It carries out the reaction ATP-independent breakage of single-stranded DNA, followed by passage and rejoining.. In terms of biological role, releases the supercoiling and torsional tension of DNA introduced during the DNA replication and transcription by transiently cleaving and rejoining one strand of the DNA duplex. Introduces a single-strand break via transesterification at a target site in duplex DNA. The scissile phosphodiester is attacked by the catalytic tyrosine of the enzyme, resulting in the formation of a DNA-(5'-phosphotyrosyl)-enzyme intermediate and the expulsion of a 3'-OH DNA strand. The free DNA strand than undergoes passage around the unbroken strand thus removing DNA supercoils. Finally, in the religation step, the DNA 3'-OH attacks the covalent intermediate to expel the active-site tyrosine and restore the DNA phosphodiester backbone. Essential for proper chromosome segregation in both meiosis and mitosis. Weakly relaxes negative supercoils and displays a distinct preference for binding single-stranded DNA. The TOP3-SGS1 protein complex may function as a eukaryotic reverse gyrase introducing positive supercoils into extrachromosomal ribosomal DNA rings. The protein is DNA topoisomerase 3 (TOP3) of Saccharomyces cerevisiae (strain ATCC 204508 / S288c) (Baker's yeast).